Consider the following 452-residue polypeptide: Histone acetyltransferase type B subunit 2 (452 aa).

6 WD repeats span residues 155-195, 205-245, 256-296, 300-340, 344-384, and 401-441; these read YEDG…NSKE, HHTK…SDGS, HHDA…NKAA, KESR…TPIS, SHCD…DDLS, and GHSS…SNDE.

The protein belongs to the WD repeat RBAP46/RBAP48/MSI1 family. Component of the HAT-B complex composed of at least HAT1 and HAT2. The HAT-B complex binds to histone H4 tail.

It localises to the cytoplasm. It is found in the nucleus. In terms of biological role, regulatory subunit of the histone acetylase B (HAT-B) complex. The complex acetylates 'Lys-12' of histone H4 which is required for telomeric silencing. The sequence is that of Histone acetyltransferase type B subunit 2 (HAT2) from Yarrowia lipolytica (strain CLIB 122 / E 150) (Yeast).